Reading from the N-terminus, the 846-residue chain is Arsenate respiratory reductase molybdopterin-containing subunit ArrA (846 aa).

The tat-type signal signal peptide spans 1 to 29 (MRIKRREFLKASAAVGAVAVASPTLNAFA). A 4Fe-4S Mo/W bis-MGD-type domain is found at 43–99 (GKWIPSTCQGCTTWCPVEFLFRMAVRSKYAATQLSKANNGYCCVRGHLMLQQLYDPD). Residues cysteine 50, cysteine 53, cysteine 57, and cysteine 85 each contribute to the [4Fe-4S] cluster site. Arginine 155 is an arsenite binding site. Tyrosine 156 provides a ligand contact to arsenate. Position 179 (histidine 179) interacts with arsenite. An arsenate-binding site is contributed by serine 180. Residue cysteine 183 coordinates Mo-bis(molybdopterin guanine dinucleotide). Lysine 188 serves as a coordination point for arsenate. Tyrosine 200 is an arsenite binding site.

This sequence belongs to the prokaryotic molybdopterin-containing oxidoreductase family. In terms of assembly, heterodimer composed of one large subunit (ArrA) and one small subunit (ArrB). The cofactor is [4Fe-4S] cluster. Requires Mo-bis(molybdopterin guanine dinucleotide) as cofactor. In terms of processing, predicted to be exported by the Tat system. The position of the signal peptide cleavage has been experimentally proven.

It is found in the periplasm. The enzyme catalyses arsenite + A + H2O = arsenate + AH2 + H(+). Its function is as follows. Component of the arsenate respiratory reductase (Arr) complex, which catalyzes the reduction of arsenate (As(V)) to arsenite (As(III)). Can use acetate as the electron donor. ArrA is the arsenate-binding subunit. The polypeptide is Arsenate respiratory reductase molybdopterin-containing subunit ArrA (Chrysiogenes arsenatis).